We begin with the raw amino-acid sequence, 268 residues long: Hydroxyethylthiazole kinase (268 aa).

Met46 serves as a coordination point for substrate. Residues Arg122 and Thr168 each contribute to the ATP site. Gly195 contributes to the substrate binding site.

It belongs to the Thz kinase family. Mg(2+) is required as a cofactor.

The enzyme catalyses 5-(2-hydroxyethyl)-4-methylthiazole + ATP = 4-methyl-5-(2-phosphooxyethyl)-thiazole + ADP + H(+). The protein operates within cofactor biosynthesis; thiamine diphosphate biosynthesis; 4-methyl-5-(2-phosphoethyl)-thiazole from 5-(2-hydroxyethyl)-4-methylthiazole: step 1/1. Functionally, catalyzes the phosphorylation of the hydroxyl group of 4-methyl-5-beta-hydroxyethylthiazole (THZ). The polypeptide is Hydroxyethylthiazole kinase (Desulfatibacillum aliphaticivorans).